A 280-amino-acid chain; its full sequence is uncharacterized protein (280 aa).

The 113-residue stretch at 96–208 (DKSIGIFQRF…GYLSTPPPVK (113 aa)) folds into the DUF1279 domain. Residues 115 to 135 (VMVPVHIVTSTVWFGSFYYAA) traverse the membrane as a helical segment. Positions 207–274 (VKEFLQDKME…KLQETKDKMS (68 aa)) form a coiled coil. Positions 245-280 (SERMEETKERFSETKDKFSEKLQETKDKMSFRKKAD) are disordered.

Its subcellular location is the membrane. This is an uncharacterized protein from Danio rerio (Zebrafish).